The following is a 54-amino-acid chain: Large ribosomal subunit protein bL32c (54 aa).

Belongs to the bacterial ribosomal protein bL32 family.

It is found in the plastid. The protein resides in the chloroplast. In Piper cenocladum (Ant piper), this protein is Large ribosomal subunit protein bL32c.